A 253-amino-acid chain; its full sequence is Sulfate transporter CysZ (253 aa).

Helical transmembrane passes span 31–51 (FVILPLLVNILLMGGAFWWLF), 75–95 (LLWPLAVISVLLVFGYFFSTI), 151–171 (IVLLILYFIPGIGQTVAPVLW), and 222–242 (IPLLNLFIMPVAVCGATAMWV).

This sequence belongs to the CysZ family.

The protein resides in the cell inner membrane. In terms of biological role, high affinity, high specificity proton-dependent sulfate transporter, which mediates sulfate uptake. Provides the sulfur source for the cysteine synthesis pathway. The chain is Sulfate transporter CysZ from Shigella flexneri.